We begin with the raw amino-acid sequence, 263 residues long: Ycf3-interacting protein 1, chloroplastic (263 aa).

Residues M1–Y71 constitute a chloroplast transit peptide. Residues A238–F258 form a helical membrane-spanning segment.

It belongs to the Y3IP1/CEST family. As to quaternary structure, interacts with Ycf3.

The protein localises to the plastid. The protein resides in the chloroplast thylakoid membrane. Functionally, nuclear genome-encoded factor that participates in photosystem I (PSI) biogenesis. Cooperates with the plastid genome-encoded protein PSI assembly Ycf3 in the assembly of stable PSI units in the thylakoid membrane. This Nicotiana tabacum (Common tobacco) protein is Ycf3-interacting protein 1, chloroplastic.